Reading from the N-terminus, the 99-residue chain is Protein S100-Z (99 aa).

EF-hand domains follow at residues 13–48 (IRIF…FLSC) and 50–85 (KETQ…LTVA). The Ca(2+) site is built by serine 20, glutamate 23, lysine 28, glutamate 33, aspartate 63, asparagine 65, aspartate 67, glutamate 69, and glutamate 74.

The protein belongs to the S-100 family. As to quaternary structure, homodimer. Interacts with S100P. Highest level of expression in spleen and leukocytes.

This is Protein S100-Z from Homo sapiens (Human).